A 272-amino-acid polypeptide reads, in one-letter code: 3-methyl-2-oxobutanoate hydroxymethyltransferase (272 aa).

Mg(2+) contacts are provided by D43 and D82. Residues 43–44 (DS), D82, and K112 each bind 3-methyl-2-oxobutanoate. Mg(2+) is bound at residue E114. E179 acts as the Proton acceptor in catalysis.

This sequence belongs to the PanB family. As to quaternary structure, homodecamer; pentamer of dimers. The cofactor is Mg(2+).

It localises to the cytoplasm. It carries out the reaction 3-methyl-2-oxobutanoate + (6R)-5,10-methylene-5,6,7,8-tetrahydrofolate + H2O = 2-dehydropantoate + (6S)-5,6,7,8-tetrahydrofolate. The protein operates within cofactor biosynthesis; (R)-pantothenate biosynthesis; (R)-pantoate from 3-methyl-2-oxobutanoate: step 1/2. In terms of biological role, catalyzes the reversible reaction in which hydroxymethyl group from 5,10-methylenetetrahydrofolate is transferred onto alpha-ketoisovalerate to form ketopantoate. The protein is 3-methyl-2-oxobutanoate hydroxymethyltransferase of Staphylococcus epidermidis (strain ATCC 35984 / DSM 28319 / BCRC 17069 / CCUG 31568 / BM 3577 / RP62A).